Here is a 154-residue protein sequence, read N- to C-terminus: Fibroblast growth factor 2 (154 aa).

A propeptide spanning residues 1–9 is cleaved from the precursor; that stretch reads MAASGITSL. Asn35 is a heparin binding site. Position 81 is a phosphotyrosine; by TEC (Tyr81). Lys94 participates in a covalent cross-link: Glycyl lysine isopeptide (Lys-Gly) (interchain with G-Cter in SUMO1). The heparin-binding stretch occupies residues 127-143; it reads KRTGQYKLGSKTGPGQK.

The protein belongs to the heparin-binding growth factors family. Monomer. Homodimer. Interacts with FGFR1, FGFR2, FGFR3 and FGFR4. Affinity between fibroblast growth factors (FGFs) and their receptors is increased by heparan sulfate glycosaminoglycans that function as coreceptors. Interacts with CSPG4, FGFBP1 and TEC. Found in a complex with FGFBP1, FGF1 and FGF2. Interacts with FGFBP3. Interacts with integrin ITGAV:ITGB3; the interaction is required for FGF2 signaling. Interacts with SNORC (via the extracellular domain). Interacts with glypican GPC3. In terms of processing, phosphorylation at Tyr-81 regulates FGF2 unconventional secretion.

It is found in the secreted. The protein resides in the nucleus. Its function is as follows. Acts as a ligand for FGFR1, FGFR2, FGFR3 and FGFR4. Also acts as an integrin ligand which is required for FGF2 signaling. Binds to integrin ITGAV:ITGB3. Plays an important role in the regulation of cell survival, cell division, cell differentiation and cell migration. Functions as a potent mitogen in vitro. Can induce angiogenesis. Mediates phosphorylation of ERK1/2 and thereby promotes retinal lens fiber differentiation. This Mus musculus (Mouse) protein is Fibroblast growth factor 2 (Fgf2).